The sequence spans 210 residues: SAP domain-containing ribonucleoprotein (210 aa).

At Ala-2 the chain carries N-acetylalanine. Residues Leu-8–Leu-42 form the SAP domain. Lys-10 bears the N6-acetyllysine mark. Over residues His-45–Glu-64 the composition is skewed to acidic residues. Residues His-45–Ala-86 form a disordered region. The segment covering Thr-65–Ala-86 has biased composition (basic and acidic residues). An N6-acetyllysine modification is found at Lys-142. The tract at residues Val-161–Ala-210 is disordered. A Phosphoserine modification is found at Ser-163. A compositionally biased stretch (polar residues) spans Val-184–Thr-193.

It belongs to the SAP domain-containing ribonucleoprotein family. Interacts with DDX39A. Interacts with FUS. Interacts (via the C-terminal domain) with DDX39B; the interaction is direct and facilitates RNA binding of DDX39B. Component of the transcription/export (TREX) complex at least composed of ALYREF/THOC4, DDX39B, SARNP/CIP29, CHTOP and the THO subcomplex; TREX seems to have dynamic structure involving ATP-dependent remodeling; in the complex interacts directly with DDX39B in a ATP-dependent manner which bridges it to ALYREF/THOC4. Low expression in spleen, liver, pancreas, testis, thymus, heart, and kidney. Increased levels are seen in hepatocellular carcinoma and pancreatic adenocarcinoma.

The protein resides in the nucleus. It localises to the nucleus speckle. In terms of biological role, binds both single-stranded and double-stranded DNA with higher affinity for the single-stranded form. Specifically binds to scaffold/matrix attachment region DNA. Also binds single-stranded RNA. Enhances RNA unwinding activity of DDX39A. May participate in important transcriptional or translational control of cell growth, metabolism and carcinogenesis. Component of the TREX complex which is thought to couple mRNA transcription, processing and nuclear export, and specifically associates with spliced mRNA and not with unspliced pre-mRNA. The TREX complex is recruited to spliced mRNAs by a transcription-independent mechanism, binds to mRNA upstream of the exon-junction complex (EJC) and is recruited in a splicing- and cap-dependent manner to a region near the 5' end of the mRNA where it functions in mRNA export to the cytoplasm via the TAP/NXF1 pathway. Associates with DDX39B, which facilitates RNA binding of DDX39B and likely plays a role in mRNA export. In Homo sapiens (Human), this protein is SAP domain-containing ribonucleoprotein (SARNP).